A 428-amino-acid polypeptide reads, in one-letter code: Delta-aminolevulinic acid dehydratase, chloroplastic (428 aa).

Residue Lys-294 is the Schiff-base intermediate with substrate of the active site. 5-aminolevulinate contacts are provided by Arg-304 and Lys-316. A Mg(2+)-binding site is contributed by Glu-332. Residue Lys-347 is the Schiff-base intermediate with substrate of the active site. Residues Ser-373 and Tyr-412 each contribute to the 5-aminolevulinate site.

The protein belongs to the ALAD family. As to quaternary structure, homooctamer. Requires Mg(2+) as cofactor.

The protein localises to the plastid. The protein resides in the chloroplast. It catalyses the reaction 2 5-aminolevulinate = porphobilinogen + 2 H2O + H(+). It functions in the pathway porphyrin-containing compound metabolism; protoporphyrin-IX biosynthesis; coproporphyrinogen-III from 5-aminolevulinate: step 1/4. Catalyzes an early step in the biosynthesis of tetrapyrroles. Binds two molecules of 5-aminolevulinate per subunit, each at a distinct site, and catalyzes their condensation to form porphobilinogen. This chain is Delta-aminolevulinic acid dehydratase, chloroplastic (HEMB), found in Hordeum vulgare (Barley).